Reading from the N-terminus, the 314-residue chain is 4-hydroxy-3-methylbut-2-enyl diphosphate reductase (314 aa).

Residue Cys-12 participates in [4Fe-4S] cluster binding. (2E)-4-hydroxy-3-methylbut-2-enyl diphosphate contacts are provided by His-43 and His-81. 2 residues coordinate dimethylallyl diphosphate: His-43 and His-81. Isopentenyl diphosphate is bound by residues His-43 and His-81. A [4Fe-4S] cluster-binding site is contributed by Cys-103. Residue His-131 participates in (2E)-4-hydroxy-3-methylbut-2-enyl diphosphate binding. His-131 is a binding site for dimethylallyl diphosphate. His-131 is an isopentenyl diphosphate binding site. Residue Glu-133 is the Proton donor of the active site. Thr-170 lines the (2E)-4-hydroxy-3-methylbut-2-enyl diphosphate pocket. Cys-198 is a binding site for [4Fe-4S] cluster. Ser-226, Asn-228, and Ser-271 together coordinate (2E)-4-hydroxy-3-methylbut-2-enyl diphosphate. The dimethylallyl diphosphate site is built by Ser-226, Asn-228, and Ser-271. Isopentenyl diphosphate is bound by residues Ser-226, Asn-228, and Ser-271.

The protein belongs to the IspH family. [4Fe-4S] cluster serves as cofactor.

The catalysed reaction is isopentenyl diphosphate + 2 oxidized [2Fe-2S]-[ferredoxin] + H2O = (2E)-4-hydroxy-3-methylbut-2-enyl diphosphate + 2 reduced [2Fe-2S]-[ferredoxin] + 2 H(+). It carries out the reaction dimethylallyl diphosphate + 2 oxidized [2Fe-2S]-[ferredoxin] + H2O = (2E)-4-hydroxy-3-methylbut-2-enyl diphosphate + 2 reduced [2Fe-2S]-[ferredoxin] + 2 H(+). It functions in the pathway isoprenoid biosynthesis; dimethylallyl diphosphate biosynthesis; dimethylallyl diphosphate from (2E)-4-hydroxy-3-methylbutenyl diphosphate: step 1/1. Its pathway is isoprenoid biosynthesis; isopentenyl diphosphate biosynthesis via DXP pathway; isopentenyl diphosphate from 1-deoxy-D-xylulose 5-phosphate: step 6/6. Functionally, catalyzes the conversion of 1-hydroxy-2-methyl-2-(E)-butenyl 4-diphosphate (HMBPP) into a mixture of isopentenyl diphosphate (IPP) and dimethylallyl diphosphate (DMAPP). Acts in the terminal step of the DOXP/MEP pathway for isoprenoid precursor biosynthesis. This is 4-hydroxy-3-methylbut-2-enyl diphosphate reductase from Bacillus subtilis (strain 168).